Consider the following 114-residue polypeptide: Small ribosomal subunit protein bS6 (114 aa).

This sequence belongs to the bacterial ribosomal protein bS6 family.

Its function is as follows. Binds together with bS18 to 16S ribosomal RNA. The protein is Small ribosomal subunit protein bS6 of Phocaeicola vulgatus (strain ATCC 8482 / DSM 1447 / JCM 5826 / CCUG 4940 / NBRC 14291 / NCTC 11154) (Bacteroides vulgatus).